We begin with the raw amino-acid sequence, 181 residues long: Urease accessory protein UreE (181 aa).

Residues 143–181 (FDPEPGAYNQAGQGHSHGHSHGHSHNHDHEHSHGHKHAH) form a disordered region.

This sequence belongs to the UreE family.

It localises to the cytoplasm. Involved in urease metallocenter assembly. Binds nickel. Probably functions as a nickel donor during metallocenter assembly. This chain is Urease accessory protein UreE, found in Marinobacter nauticus (strain ATCC 700491 / DSM 11845 / VT8) (Marinobacter aquaeolei).